We begin with the raw amino-acid sequence, 20 residues long: Putative 60 kDa spermidine-binding protein (20 aa).

A disordered region spans residues 1-20 (SXAAVVEPPETSQNRIAKGE). Positions 10-20 (ETSQNRIAKGE) are enriched in polar residues.

Dimer of 18 kDa and 60 kDa subunit.

The protein resides in the microsome membrane. It is found in the endoplasmic reticulum membrane. May have spermidine-binding activity. This Zea mays (Maize) protein is Putative 60 kDa spermidine-binding protein.